The following is a 1325-amino-acid chain: Cellulose synthase 1 operon protein C (1325 aa).

The first 30 residues, 1–30 (MNRRYVFSLSAGLLASSCMGAIMPVPVARA), serve as a signal peptide directing secretion. TPR repeat units follow at residues 50–83 (RQILLQQARFWLQQQQYDNARQALQNAQRIAPDA), 85–117 (DVLEVQGEYQTAMGNREAAADTLRHLQEVAPGS), 292–325 (AGLARQAGFQQLNSGRLSAAEQSFQSALQINSHD), 326–359 (ADSLGGMGLVSMRQGDAAEARRYFQEAMAADPKT), 406–439 (TGATLMLADLQRTTGQIDASEQEYRSVLARDPNN), 558–591 (NDAATRRLLSGLSPEDYSPAIRSIAEEMQIKEDL), 702–735 (MGIAVAQSDLLNQRGDQAQAYDHLAPALRADPEA), and 737–769 (SPKLALARLYNGEGKSSKALDIDLAVLRHNPQD). A disordered region spans residues 838 to 886 (VEGSRSASGPAATEEDALAPPSSNPFRHHGYGRQTELGAPVTGGSYSME).

The protein belongs to the AcsC/BcsC family.

The protein localises to the cell outer membrane. Its pathway is glycan metabolism; bacterial cellulose biosynthesis. Its function is as follows. Required for maximal bacterial cellulose synthesis. It may be involved in the formation of a membrane complex for extrusion of the cellulose product. The polypeptide is Cellulose synthase 1 operon protein C (bcsCI) (Komagataeibacter xylinus (Gluconacetobacter xylinus)).